A 167-amino-acid chain; its full sequence is uncharacterized protein (167 aa).

3 residues coordinate a divalent metal cation: His48, His127, and His131.

The protein belongs to the DinB family.

This is an uncharacterized protein from Bacillus subtilis (strain 168).